The sequence spans 45 residues: Bomanin Short 2 (45 aa).

A signal peptide spans 1-20 (MKFFSVVTVFVFGLLALANA). Positions 21–27 (VPLSPDP) are cleaved as a propeptide — removed by a dipeptidylpeptidase. Cysteines 36 and 39 form a disulfide. At G43 the chain carries Glycine amide.

In terms of tissue distribution, hemolymph (at protein level).

Its subcellular location is the secreted. Its function is as follows. Secreted immune-induced peptide induced by Toll signaling. Has a role in resistance to bacterial and fungal infections. The protein is Bomanin Short 2 of Drosophila melanogaster (Fruit fly).